The sequence spans 157 residues: MYGYPVTTVFPPVSIEDFLSLSIGHWISLRSQFKCSSIDDNWHSSERGDIKLALGPSDNSNTRNLAISMGSQYAMKLEFFLDGRLQSENCIIGTWQIWPDGSLELSYHDANGNEQCERIWFMKTNLRLRSTVAFNQDGTLRQASFCSEIRRVTKHKL.

The protein belongs to the CpcS/CpeS biliprotein lyase family.

It is found in the plastid. Its subcellular location is the organellar chromatophore. Its function is as follows. Covalently attaches a chromophore to Cys residue(s) of phycobiliproteins. This is Chromophore lyase CpcS/CpeS 1 from Paulinella chromatophora.